The primary structure comprises 1642 residues: Mitochondrial 3' processome subunit 2 (1642 aa).

Residues 1-27 (MGLPFLCHTRVCLFSNKIPFVLCGSRF) constitute a mitochondrion transit peptide. 2 disordered regions span residues 43-69 (ETLN…PQKK) and 745-772 (KGEK…LSGP). Residues 49 to 65 (ELSSPSTSKEPSVGSDS) show a composition bias toward polar residues.

As to quaternary structure, component of the mitochondrial 3' processome (MPsome) complex composed at least of terminal uridylyltransferase KRET1/TUT1, 3'-5' exonuclease DSS1, MPSS1, MPSS2 and MPSS3. Within the complex, interacts with DSS1.

The protein resides in the mitochondrion. In terms of biological role, as part of the mitochondrial 3' processome (MPsome), involved in the maturation of guided RNA (gRNA) precursors. This is Mitochondrial 3' processome subunit 2 from Trypanosoma brucei brucei.